The primary structure comprises 264 residues: 3-dehydroquinate dehydratase (264 aa).

3-dehydroquinate is bound by residues 50–52 (EWR) and arginine 86. Residue histidine 148 is the Proton donor/acceptor of the active site. Residue lysine 175 is the Schiff-base intermediate with substrate of the active site. 3-dehydroquinate is bound by residues arginine 217, serine 236, and glutamine 240.

It belongs to the type-I 3-dehydroquinase family. Homodimer.

The enzyme catalyses 3-dehydroquinate = 3-dehydroshikimate + H2O. Its pathway is metabolic intermediate biosynthesis; chorismate biosynthesis; chorismate from D-erythrose 4-phosphate and phosphoenolpyruvate: step 3/7. Involved in the third step of the chorismate pathway, which leads to the biosynthesis of aromatic amino acids. Catalyzes the cis-dehydration of 3-dehydroquinate (DHQ) and introduces the first double bond of the aromatic ring to yield 3-dehydroshikimate. The sequence is that of 3-dehydroquinate dehydratase from Albidiferax ferrireducens (strain ATCC BAA-621 / DSM 15236 / T118) (Rhodoferax ferrireducens).